The chain runs to 206 residues: Holliday junction branch migration complex subunit RuvA (206 aa).

The interval M1 to N64 is domain I. Residues T65–P143 are domain II. The segment at Y144–A157 is flexible linker. The segment at P158–L206 is domain III.

Belongs to the RuvA family. In terms of assembly, homotetramer. Forms an RuvA(8)-RuvB(12)-Holliday junction (HJ) complex. HJ DNA is sandwiched between 2 RuvA tetramers; dsDNA enters through RuvA and exits via RuvB. An RuvB hexamer assembles on each DNA strand where it exits the tetramer. Each RuvB hexamer is contacted by two RuvA subunits (via domain III) on 2 adjacent RuvB subunits; this complex drives branch migration. In the full resolvosome a probable DNA-RuvA(4)-RuvB(12)-RuvC(2) complex forms which resolves the HJ.

Its subcellular location is the cytoplasm. In terms of biological role, the RuvA-RuvB-RuvC complex processes Holliday junction (HJ) DNA during genetic recombination and DNA repair, while the RuvA-RuvB complex plays an important role in the rescue of blocked DNA replication forks via replication fork reversal (RFR). RuvA specifically binds to HJ cruciform DNA, conferring on it an open structure. The RuvB hexamer acts as an ATP-dependent pump, pulling dsDNA into and through the RuvAB complex. HJ branch migration allows RuvC to scan DNA until it finds its consensus sequence, where it cleaves and resolves the cruciform DNA. This chain is Holliday junction branch migration complex subunit RuvA, found in Tolumonas auensis (strain DSM 9187 / NBRC 110442 / TA 4).